The sequence spans 413 residues: Exodeoxyribonuclease I (413 aa).

The Exonuclease domain maps to 12–193 (LFYDYETFGI…VSDVYATIEI (182 aa)). Asp-15, Glu-17, and Asp-186 together coordinate Mg(2+). Glu-17 contributes to the substrate binding site. One can recognise an ExoI SH3-like domain in the interval 202 to 349 (PRLFDFFFKI…QNIKIIFSKN (148 aa)). The 64-residue stretch at 350–413 (NNTNQFFNVD…RYRARNFFIH (64 aa)) folds into the ExoI C-terminal domain.

As to quaternary structure, monomer. Interacts with ssb (via C-terminus); this interaction stimulates the exonuclease activity by recruiting the enzyme to its substrate. Requires Mg(2+) as cofactor.

The catalysed reaction is Exonucleolytic cleavage in the 3'- to 5'-direction to yield nucleoside 5'-phosphates.. In terms of biological role, degrades single-stranded DNA (ssDNA) in a highly processive manner. Also functions as a DNA deoxyribophosphodiesterase that releases deoxyribose-phosphate moieties following the cleavage of DNA at an apurinic/apyrimidinic (AP) site by either an AP endonuclease or AP lyase. The protein is Exodeoxyribonuclease I (sbcB) of Buchnera aphidicola subsp. Acyrthosiphon pisum (strain APS) (Acyrthosiphon pisum symbiotic bacterium).